A 152-amino-acid chain; its full sequence is Calcium-binding protein SPEC 1A (152 aa).

EF-hand domains follow at residues 10–45, 46–81, 84–119, and 120–152; these read EEVT…TGKS, YTDK…QMVK, WKEE…SKPP, and MKRK…IKSC. 20 residues coordinate Ca(2+): aspartate 23, aspartate 25, serine 27, serine 29, glutamate 34, aspartate 59, aspartate 61, serine 63, threonine 65, glutamate 70, aspartate 97, aspartate 99, asparagine 101, serine 103, glutamate 108, aspartate 133, asparagine 135, aspartate 137, lysine 139, and glutamate 144. Residues 95–121 form a disordered region; the sequence is DMDKDGNGSLSPQELREALSASKPPMK.

As to expression, found in cell lineages giving rise to the aboral ectoderm, a squamous epithelium covering the surface of the late stage embryo and larva.

Functionally, calcium-binding protein involved in larval development and metamorphosis. Likely to function as calcium buffers mediating the transport of calcium from the sea water to the blastocoel where calcium is required for skeleton formation. This Strongylocentrotus purpuratus (Purple sea urchin) protein is Calcium-binding protein SPEC 1A (SPEC1).